The sequence spans 145 residues: S-adenosylmethionine synthase 2 (145 aa).

ATP is bound by residues 6 to 7 (RK), alanine 23, lysine 27, and lysine 31. Position 31 (lysine 31) interacts with L-methionine.

This sequence belongs to the AdoMet synthase family. In terms of assembly, homotetramer. It depends on Mn(2+) as a cofactor. Mg(2+) is required as a cofactor. Requires Co(2+) as cofactor. The cofactor is K(+). In terms of tissue distribution, mainly in floral buds and roots.

Its subcellular location is the cytoplasm. It catalyses the reaction L-methionine + ATP + H2O = S-adenosyl-L-methionine + phosphate + diphosphate. It participates in amino-acid biosynthesis; S-adenosyl-L-methionine biosynthesis; S-adenosyl-L-methionine from L-methionine: step 1/1. Catalyzes the formation of S-adenosylmethionine from methionine and ATP. The reaction comprises two steps that are both catalyzed by the same enzyme: formation of S-adenosylmethionine (AdoMet) and triphosphate, and subsequent hydrolysis of the triphosphate. This is S-adenosylmethionine synthase 2 (SMS-2) from Petroselinum crispum (Parsley).